A 198-amino-acid chain; its full sequence is Acireductone dioxygenase 2 (198 aa).

Positions 99, 101, 105, and 144 each coordinate Fe(2+). Residues His99, His101, Glu105, and His144 each coordinate Ni(2+).

Belongs to the acireductone dioxygenase (ARD) family. Fe(2+) serves as cofactor. It depends on Ni(2+) as a cofactor. In terms of tissue distribution, ubiquitous.

It is found in the cytoplasm. The protein resides in the nucleus. It carries out the reaction 1,2-dihydroxy-5-(methylsulfanyl)pent-1-en-3-one + O2 = 4-methylsulfanyl-2-oxobutanoate + formate + 2 H(+). It catalyses the reaction 1,2-dihydroxy-5-(methylsulfanyl)pent-1-en-3-one + O2 = 3-(methylsulfanyl)propanoate + CO + formate + 2 H(+). It participates in amino-acid biosynthesis; L-methionine biosynthesis via salvage pathway; L-methionine from S-methyl-5-thio-alpha-D-ribose 1-phosphate: step 5/6. In terms of biological role, catalyzes 2 different reactions between oxygen and the acireductone 1,2-dihydroxy-3-keto-5-methylthiopentene (DHK-MTPene) depending upon the metal bound in the active site. Fe-containing acireductone dioxygenase (Fe-ARD) produces formate and 2-keto-4-methylthiobutyrate (KMTB), the alpha-ketoacid precursor of methionine in the methionine recycle pathway. Ni-containing acireductone dioxygenase (Ni-ARD) produces methylthiopropionate, carbon monoxide and formate, and does not lie on the methionine recycle pathway. The chain is Acireductone dioxygenase 2 (ARD2) from Oryza sativa subsp. indica (Rice).